Here is a 288-residue protein sequence, read N- to C-terminus: Phenazine biosynthesis-like domain-containing protein (288 aa).

E46 is a catalytic residue.

This sequence belongs to the PhzF family. As to quaternary structure, interacts with UNRIP/MAWD.

The polypeptide is Phenazine biosynthesis-like domain-containing protein (PBLD) (Homo sapiens (Human)).